The chain runs to 93 residues: UPF0457 protein GTNG_2792 (93 aa).

This sequence belongs to the UPF0457 family.

This chain is UPF0457 protein GTNG_2792, found in Geobacillus thermodenitrificans (strain NG80-2).